The sequence spans 478 residues: MLO-like protein 13 (478 aa).

The Extracellular segment spans residues Met-1–Glu-10. A helical transmembrane segment spans residues Tyr-11 to Ala-31. The Cytoplasmic segment spans residues Glu-32–Glu-60. A helical membrane pass occupies residues Leu-61–Ile-81. At Cys-82–His-145 the chain is on the extracellular side. Residues Ile-146–Gly-166 form a helical membrane-spanning segment. Topologically, residues Gly-167–Lys-276 are cytoplasmic. 2 helical membrane-spanning segments follow: residues Val-277–Gly-297 and Gly-298–Ala-318. The Cytoplasmic segment spans residues Lys-319–Gln-360. A helical transmembrane segment spans residues Leu-361–Phe-381. The Extracellular segment spans residues Thr-382 to Leu-400. A helical transmembrane segment spans residues Val-401–Val-421. The Cytoplasmic segment spans residues Thr-422–Pro-478. Residues Asn-435–Ser-456 are calmodulin-binding. The span at Arg-449–Glu-462 shows a compositional bias: basic and acidic residues. The tract at residues Arg-449–Pro-478 is disordered. Residues Gln-464–Pro-478 are compositionally biased toward polar residues.

This sequence belongs to the MLO family.

The protein resides in the membrane. Functionally, may be involved in modulation of pathogen defense and leaf cell death. Activity seems to be regulated by Ca(2+)-dependent calmodulin binding and seems not to require heterotrimeric G proteins. This is MLO-like protein 13 (MLO13) from Arabidopsis thaliana (Mouse-ear cress).